The chain runs to 1503 residues: MAPTEEANVTKPTGELRPDEKLNYEEDVKCSGSSSTTVGKTAYDTDDISQSQAAELQDLARQLSRASRQGGLDVENEPQQVINPFLDSESDPELNPDSKSFNVAKWLKTILQITSRDPERFPKRTAGVSFRNMNVHGYGTAADYQSDVGNLPLKAWSGIMSMLGLRKKVRIDILRDFEGLVKSGEMLVVLGRPGSGCSTLLRTLSGETHGLYLDEGNDIQYQGISWEQMHKNFRGEVIYQAETETHFPQMTVGDTLYFAARARAPANRLPGVSREQYAIHMRSMVMSMLSLSHTINTQVGNEYIRGVSGGERKRISIAETTLSGSPLQCWDNSTRGLDSANALEFVKSLRLSTKYSGTTAIVAIYQAGQAIYDIFDKAVVLYEGHQIYFGNAVRAKEYFIEMGFDCPSRQTTADFLTSVTSPSERRVRPGYESRVPQTPAEFAQRWKESEDRRILMQEIDEYNKTYPLHGEQLQKFQASRLAEKSRSTSKSSPYTLSYPMEIKLCMWRGFQRLKGDMSMTLTSIIGNIAMSLIIASVFYNQQETTDSFFSRGSLLFFAILMNAFASSLEILTLWHQRPIVEKHDKYALYHPSSEAISSILVDMPAKLAVAIVFNLIIYFMTNLRRTPGHFFIFFLFSFTTTLTMSNVFRSIAAVSRTLSQALVPTSIFMLALVIYTGFTIPVRDMRPWFKWISYINPIQYAFESLMINEFHDREFKCAVYIPSGPGYSNVSGTSKICAAKGAMAGKPTVSGDVFLRETYSYYASHMWRNYGIIVAFFLFFLFVYITATELVSAKPSKGEILVFPKGKVPAFLKQSKKKQDPEAASTQEKQPVETSGHDQTAAIVKQTSVFHWESVCYDIKIKKESRRILDNVDGWVKPGTLTALMGVSGAGKTTLLDVLANRVTMGVVTGEMLVDGRLRDDSFQRKTGYVQQQDLHLEISTVREALTFSALLRQPNTTPYEEKVAYVEEVIKMLGMEEYANAVVGVLGEGLNVEQRKRLTIGVEIAAKPDLLLFFDEPTSGLDSQTAWSICTLMRKLADHGQAVLCTIHQPSAMLMQEFDRLLFLASGGRTVYFGELGKHMSTLIEYFESKGAPKCPPDANPAEWMLEVIGAAPGSKTDIDWPAVWRDSAERVEVRRHLAELKSELSQKPQTPRLTGYGEFAMPLWKQYLIVQHRMFQQYWRSPDYIYSKACLAIVPTLFIGFTFYKEQVSLQGIQNQMFAIFMFMILFPNLVQQMMPYFVIQRSLYEVRERPSKTYSWIAFMISSVVVEIPWNALLTVPAFFCWYYPIGFYKNAIPTDAVTERSGTMFLLILIFLMFSSTFSSMVIAGIEQAETGGNIAQLCFSLTLVFCGVLVSPTAMPGFWIFMYRLSPFTYFVSAVLSTGVGRTDIVCAANEILRLTPAAGQTCMEYLGPYTKFAGGRILTPDATDMCEFCAVADTDTFLKGVNIIFDERWRNIGILFGYIAFNMVGAIGLYWLLRVPKRKSGVKQGQQPQKQANETKA.

A disordered region spans residues 1 to 46 (MAPTEEANVTKPTGELRPDEKLNYEEDVKCSGSSSTTVGKTAYDTD). N-linked (GlcNAc...) asparagine glycosylation occurs at asparagine 8. A compositionally biased stretch (basic and acidic residues) spans 14-29 (GELRPDEKLNYEEDVK). An ABC transporter 1 domain is found at 153–408 (LKAWSGIMSM…FIEMGFDCPS (256 aa)). Residues asparagine 332 and asparagine 463 are each glycosylated (N-linked (GlcNAc...) asparagine). 5 helical membrane passes run 519–539 (MTLT…SVFY), 554–574 (LLFF…LTLW), 599–619 (ILVD…IIYF), 628–648 (GHFF…SNVF), and 662–682 (LVPT…TIPV). Asparagine 729 is a glycosylation site (N-linked (GlcNAc...) asparagine). A helical membrane pass occupies residues 771–791 (GIIVAFFLFFLFVYITATELV). Residues 816 to 838 (KKKQDPEAASTQEKQPVETSGHD) form a disordered region. Residues 824–833 (ASTQEKQPVE) show a composition bias toward polar residues. Positions 850–1093 (FHWESVCYDI…LIEYFESKGA (244 aa)) constitute an ABC transporter 2 domain. 886–893 (GVSGAGKT) lines the ATP pocket. 6 helical membrane passes run 1186–1206 (YIYS…FTFY), 1222–1242 (IFMF…YFVI), 1259–1279 (WIAF…LLTV), 1310–1330 (LLIL…IAGI), 1346–1366 (LTLV…FWIF), and 1458–1478 (IGIL…LYWL). Asparagine 1499 is a glycosylation site (N-linked (GlcNAc...) asparagine).

It belongs to the ABC transporter superfamily. ABCG family. PDR (TC 3.A.1.205) subfamily.

It localises to the cell membrane. The catalysed reaction is itraconazole(in) + ATP + H2O = itraconazole(out) + ADP + phosphate + H(+). It carries out the reaction voriconazole(in) + ATP + H2O = voriconazole(out) + ADP + phosphate + H(+). The enzyme catalyses fluconazole(in) + ATP + H2O = fluconazole(out) + ADP + phosphate + H(+). It catalyses the reaction (2R,4S)-ketoconazole(in) + ATP + H2O = (2R,4S)-ketoconazole(out) + ADP + phosphate + H(+). The catalysed reaction is (2S,4R)-ketoconazole(in) + ATP + H2O = (2S,4R)-ketoconazole(out) + ADP + phosphate + H(+). It carries out the reaction (R)-miconazole(in) + ATP + H2O = (R)-miconazole(out) + ADP + phosphate + H(+). The enzyme catalyses (S)-miconazole(in) + ATP + H2O = (S)-miconazole(out) + ADP + phosphate + H(+). Its activity is regulated as follows. Azole transport activity is inhibited by milbemycin oxime. In terms of biological role, pleiotropic ABC efflux transporter involved in the modulation susceptibility to azoles, including fluconazole, itraconazole, ketoconazole, miconazole and voriconazole. The polypeptide is ABC multidrug transporter MDR3 (Trichophyton rubrum (strain ATCC MYA-4607 / CBS 118892) (Athlete's foot fungus)).